Consider the following 218-residue polypeptide: Thiamine-phosphate synthase (218 aa).

Residues 36-40 and Asp70 contribute to the 4-amino-2-methyl-5-(diphosphooxymethyl)pyrimidine site; that span reads QVRSK. 2 residues coordinate Mg(2+): Asp71 and Asp94. 4-amino-2-methyl-5-(diphosphooxymethyl)pyrimidine is bound at residue Thr113. 141 to 143 contributes to the 2-[(2R,5Z)-2-carboxy-4-methylthiazol-5(2H)-ylidene]ethyl phosphate binding site; that stretch reads TPT. Lys144 serves as a coordination point for 4-amino-2-methyl-5-(diphosphooxymethyl)pyrimidine.

Belongs to the thiamine-phosphate synthase family. It depends on Mg(2+) as a cofactor.

It catalyses the reaction 2-[(2R,5Z)-2-carboxy-4-methylthiazol-5(2H)-ylidene]ethyl phosphate + 4-amino-2-methyl-5-(diphosphooxymethyl)pyrimidine + 2 H(+) = thiamine phosphate + CO2 + diphosphate. It carries out the reaction 2-(2-carboxy-4-methylthiazol-5-yl)ethyl phosphate + 4-amino-2-methyl-5-(diphosphooxymethyl)pyrimidine + 2 H(+) = thiamine phosphate + CO2 + diphosphate. The enzyme catalyses 4-methyl-5-(2-phosphooxyethyl)-thiazole + 4-amino-2-methyl-5-(diphosphooxymethyl)pyrimidine + H(+) = thiamine phosphate + diphosphate. Its pathway is cofactor biosynthesis; thiamine diphosphate biosynthesis; thiamine phosphate from 4-amino-2-methyl-5-diphosphomethylpyrimidine and 4-methyl-5-(2-phosphoethyl)-thiazole: step 1/1. In terms of biological role, condenses 4-methyl-5-(beta-hydroxyethyl)thiazole monophosphate (THZ-P) and 2-methyl-4-amino-5-hydroxymethyl pyrimidine pyrophosphate (HMP-PP) to form thiamine monophosphate (TMP). This chain is Thiamine-phosphate synthase, found in Corynebacterium jeikeium (strain K411).